We begin with the raw amino-acid sequence, 97 residues long: RNA-binding protein YhbY (97 aa).

In terms of domain architecture, CRM spans 1-97; the sequence is MNLSTKQKQH…TKERKISLPR (97 aa).

This Escherichia coli O157:H7 protein is RNA-binding protein YhbY (yhbY).